The sequence spans 410 residues: MAQYDVLIVGAGHGGAQAAVALRQNKFEGTIAIVGDEPELPYERPPLSKEYFSGEKSFDRILIRPATFWAERNVDMLLGKRVASVDPAGHSVTLTDGSTIGYGKLVWATGGAPRKLACSGHHLSGVHGVRTREDADRMLGEMERTTSVVVIGGGYIGLEAAAVLSKAGKKVTVLEALDRVLARVAGEALSRFYEAEHRAHGVDVQLGAKVDCIVGDDQDRVTGVQMHDGSVIPADMVIVGIGIIPAVEPLIAAGAAGGNGVDVDEYCRTSLPDIYAIGDCAMHANAFAEGARIRLESVQNANDQATTAAKHILGGTDAYHAVPWFWSNQYDLRLQTMGLSIGYDETIVRGDPANRSFSVVYLKNGRVLALDCVNAVKDYVQGKALVTGGVSPDKASLANPEIPLKTLLPA.

FAD-binding residues include Gly14, Asp36, Lys49, Val82, Arg130, Asp279, and Val298.

This sequence belongs to the FAD-dependent oxidoreductase family. The chloroacetanilide N-alkylformylase multicomponent enzyme system is composed of an oxygenase component (CndA) and an electron transfer component formed by a ferredoxin reductase (CndC1) and a ferredoxin (CndB1). In vitro, chloroacetanilide N-alkylformylase assays in which CndB1 is substituted for CndB2 demonstrate that the two enzymes possess nearly identical activities. The cofactor is FAD.

The catalysed reaction is 2 reduced [2Fe-2S]-[ferredoxin] + NAD(+) + H(+) = 2 oxidized [2Fe-2S]-[ferredoxin] + NADH. Its function is as follows. Component of the chloroacetanilide N-alkylformylase multicomponent enzyme system involved in the degradation of chloroacetanilide herbicides (N-alkoxyalkyl-N-chloroacetyl-substituted aniline derivatives). In vitro, catalyzes the transfers of electrons from ferredoxin (CndB1) to NADH. N-dealkylase utilizes NADH, but not NADPH, as the electron donor. This chain is Chloroacetanilide N-alkylformylase, ferredoxin reductase component, found in Rhizorhabdus wittichii (strain DC-6 / KACC 16600) (Sphingomonas wittichii).